Here is a 69-residue protein sequence, read N- to C-terminus: Microcin H47 immunity protein MchI (69 aa).

Residues 1–6 (MSYKKL) lie on the Cytoplasmic side of the membrane. Residues 7–29 (YQLTAIFSLPLTILLVSLSSLRI) form a helical membrane-spanning segment. Residues 30–38 (VGEGNSYVD) are Periplasmic-facing. The helical transmembrane segment at 39-61 (VFLSFIIFLGFIELIHGIRKILV) threads the bilayer. Residues 62 to 69 (WSGWKNGS) lie on the Cytoplasmic side of the membrane.

The protein resides in the cell membrane. Protects a microcin H47-producer cell against microcin H47. The protein is Microcin H47 immunity protein MchI (mchI) of Escherichia coli.